The sequence spans 135 residues: ATP synthase epsilon chain (135 aa).

The protein belongs to the ATPase epsilon chain family. In terms of assembly, F-type ATPases have 2 components, CF(1) - the catalytic core - and CF(0) - the membrane proton channel. CF(1) has five subunits: alpha(3), beta(3), gamma(1), delta(1), epsilon(1). CF(0) has three main subunits: a, b and c.

Its subcellular location is the cell inner membrane. Produces ATP from ADP in the presence of a proton gradient across the membrane. The sequence is that of ATP synthase epsilon chain from Granulibacter bethesdensis (strain ATCC BAA-1260 / CGDNIH1).